Here is a 146-residue protein sequence, read N- to C-terminus: Cell division protein SepF (146 aa).

It belongs to the SepF family. As to quaternary structure, homodimer. Interacts with FtsZ.

Its subcellular location is the cytoplasm. Its function is as follows. Cell division protein that is part of the divisome complex and is recruited early to the Z-ring. Probably stimulates Z-ring formation, perhaps through the cross-linking of FtsZ protofilaments. Its function overlaps with FtsA. The polypeptide is Cell division protein SepF (Alkaliphilus oremlandii (strain OhILAs) (Clostridium oremlandii (strain OhILAs))).